Reading from the N-terminus, the 697-residue chain is Elongation factor G 2 (697 aa).

Residues 6 to 281 (TNYRNFGIFA…AVVDFLPNPT (276 aa)) enclose the tr-type G domain. Residues 15–22 (AHVDAGKT), 79–83 (DTPGH), and 133–136 (NKLD) each bind GTP.

Belongs to the TRAFAC class translation factor GTPase superfamily. Classic translation factor GTPase family. EF-G/EF-2 subfamily.

The protein localises to the cytoplasm. In terms of biological role, catalyzes the GTP-dependent ribosomal translocation step during translation elongation. During this step, the ribosome changes from the pre-translocational (PRE) to the post-translocational (POST) state as the newly formed A-site-bound peptidyl-tRNA and P-site-bound deacylated tRNA move to the P and E sites, respectively. Catalyzes the coordinated movement of the two tRNA molecules, the mRNA and conformational changes in the ribosome. This Trichodesmium erythraeum (strain IMS101) protein is Elongation factor G 2.